The sequence spans 275 residues: Dermonecrotic toxin LhSicTox-alphaVI1ii (275 aa).

Residue H5 is part of the active site. The Mg(2+) site is built by E25 and D27. The Nucleophile role is filled by H41. 2 disulfide bridges follow: C45–C51 and C47–C192. Position 85 (D85) interacts with Mg(2+).

The protein belongs to the arthropod phospholipase D family. Class II subfamily. Mg(2+) serves as cofactor. In terms of tissue distribution, expressed by the venom gland.

It is found in the secreted. It carries out the reaction an N-(acyl)-sphingosylphosphocholine = an N-(acyl)-sphingosyl-1,3-cyclic phosphate + choline. It catalyses the reaction an N-(acyl)-sphingosylphosphoethanolamine = an N-(acyl)-sphingosyl-1,3-cyclic phosphate + ethanolamine. The catalysed reaction is a 1-acyl-sn-glycero-3-phosphocholine = a 1-acyl-sn-glycero-2,3-cyclic phosphate + choline. The enzyme catalyses a 1-acyl-sn-glycero-3-phosphoethanolamine = a 1-acyl-sn-glycero-2,3-cyclic phosphate + ethanolamine. In terms of biological role, dermonecrotic toxins cleave the phosphodiester linkage between the phosphate and headgroup of certain phospholipids (sphingolipid and lysolipid substrates), forming an alcohol (often choline) and a cyclic phosphate. This toxin acts on sphingomyelin (SM). It may also act on ceramide phosphoethanolamine (CPE), lysophosphatidylcholine (LPC) and lysophosphatidylethanolamine (LPE), but not on lysophosphatidylserine (LPS), and lysophosphatidylglycerol (LPG). It acts by transphosphatidylation, releasing exclusively cyclic phosphate products as second products. Induces dermonecrosis, hemolysis, increased vascular permeability, edema, inflammatory response, and platelet aggregation. The protein is Dermonecrotic toxin LhSicTox-alphaVI1ii of Loxosceles hirsuta (Recluse spider).